Reading from the N-terminus, the 158-residue chain is DNA-binding transcriptional repressor RacR (158 aa).

In terms of assembly, homooctamer.

In terms of biological role, transcriptional regulator that represses the expression of ydaS and ydaT under normal physiological conditions. It binds to its own upstream sequence and represses the adjacent and divergently coded ydaS-ydaT operon. RacR-mediated down-regulation of ydaS and ydaT may be critical for cell survival. RacR ensures that the prophage DNA is maintained in the genome. When the expression of the racR gene is reduced, the prophage Rac is excised from the genome, possibly to counteract the lethal toxicity of YdaT. The sequence is that of DNA-binding transcriptional repressor RacR (racR) from Escherichia coli (strain K12).